The primary structure comprises 295 residues: UDP-3-O-acyl-N-acetylglucosamine deacetylase (295 aa).

Zn(2+) contacts are provided by histidine 75, histidine 232, and aspartate 236. Histidine 259 (proton donor) is an active-site residue.

Belongs to the LpxC family. Zn(2+) serves as cofactor.

It catalyses the reaction a UDP-3-O-[(3R)-3-hydroxyacyl]-N-acetyl-alpha-D-glucosamine + H2O = a UDP-3-O-[(3R)-3-hydroxyacyl]-alpha-D-glucosamine + acetate. Its pathway is glycolipid biosynthesis; lipid IV(A) biosynthesis; lipid IV(A) from (3R)-3-hydroxytetradecanoyl-[acyl-carrier-protein] and UDP-N-acetyl-alpha-D-glucosamine: step 2/6. Catalyzes the hydrolysis of UDP-3-O-myristoyl-N-acetylglucosamine to form UDP-3-O-myristoylglucosamine and acetate, the committed step in lipid A biosynthesis. In Helicobacter pylori (strain J99 / ATCC 700824) (Campylobacter pylori J99), this protein is UDP-3-O-acyl-N-acetylglucosamine deacetylase.